The primary structure comprises 204 residues: Tat proofreading chaperone DmsD (204 aa).

Belongs to the TorD/DmsD family. DmsD subfamily.

Functionally, required for biogenesis/assembly of DMSO reductase, but not for the interaction of the DmsA signal peptide with the Tat system. May be part of a chaperone cascade complex that facilitates a folding-maturation pathway for the substrate protein. This is Tat proofreading chaperone DmsD from Escherichia coli O157:H7.